Here is a 255-residue protein sequence, read N- to C-terminus: MSLDLTPTLSPARPLDSADAMEDRLREIGAARYHDRHPFHHLLHGGQLTRGQVQAWALNRYYYQCSIPVKDAVVISRFRDRATRVEWRHRLEDHDGAEGTEGGIDRWLVLTDALGLDRDYVEATDGILPATRFAVDAYVHFVRDQSPLEAIASCLTELFAPHIHAERISGMLAHYDFVNPTVMAYFQRRLSQAPRDADYALRYVREHARTPQERAAVCNALIFKTQVLWTQLDALHHAYVLGHVPPGAFVPEDMR.

Belongs to the PqqC family.

The enzyme catalyses 6-(2-amino-2-carboxyethyl)-7,8-dioxo-1,2,3,4,7,8-hexahydroquinoline-2,4-dicarboxylate + 3 O2 = pyrroloquinoline quinone + 2 H2O2 + 2 H2O + H(+). It participates in cofactor biosynthesis; pyrroloquinoline quinone biosynthesis. In terms of biological role, ring cyclization and eight-electron oxidation of 3a-(2-amino-2-carboxyethyl)-4,5-dioxo-4,5,6,7,8,9-hexahydroquinoline-7,9-dicarboxylic-acid to PQQ. The sequence is that of Pyrroloquinoline-quinone synthase from Cereibacter sphaeroides (strain ATCC 17025 / ATH 2.4.3) (Rhodobacter sphaeroides).